The chain runs to 388 residues: Succinate--CoA ligase [ADP-forming] subunit beta (388 aa).

Residues 9–244 enclose the ATP-grasp domain; it reads KQLFAEYGLP…PSQDDPREAH (236 aa). ATP-binding positions include Lys46, 53–55, Glu99, Thr102, and Glu107; that span reads GRG. Mg(2+) contacts are provided by Asn199 and Asp213. Residues Asn264 and 321-323 each bind substrate; that span reads GIV.

It belongs to the succinate/malate CoA ligase beta subunit family. In terms of assembly, heterotetramer of two alpha and two beta subunits. Mg(2+) is required as a cofactor.

The enzyme catalyses succinate + ATP + CoA = succinyl-CoA + ADP + phosphate. The catalysed reaction is GTP + succinate + CoA = succinyl-CoA + GDP + phosphate. It participates in carbohydrate metabolism; tricarboxylic acid cycle; succinate from succinyl-CoA (ligase route): step 1/1. In terms of biological role, succinyl-CoA synthetase functions in the citric acid cycle (TCA), coupling the hydrolysis of succinyl-CoA to the synthesis of either ATP or GTP and thus represents the only step of substrate-level phosphorylation in the TCA. The beta subunit provides nucleotide specificity of the enzyme and binds the substrate succinate, while the binding sites for coenzyme A and phosphate are found in the alpha subunit. The chain is Succinate--CoA ligase [ADP-forming] subunit beta from Pseudomonas syringae pv. syringae (strain B728a).